A 183-amino-acid polypeptide reads, in one-letter code: Potassium-transporting ATPase KdpC subunit (183 aa).

The chain crosses the membrane as a helical span at residues leucine 11 to alanine 31.

This sequence belongs to the KdpC family. The system is composed of three essential subunits: KdpA, KdpB and KdpC.

It localises to the cell inner membrane. Its function is as follows. Part of the high-affinity ATP-driven potassium transport (or Kdp) system, which catalyzes the hydrolysis of ATP coupled with the electrogenic transport of potassium into the cytoplasm. This subunit acts as a catalytic chaperone that increases the ATP-binding affinity of the ATP-hydrolyzing subunit KdpB by the formation of a transient KdpB/KdpC/ATP ternary complex. In Pseudomonas putida (strain GB-1), this protein is Potassium-transporting ATPase KdpC subunit.